Here is a 1508-residue protein sequence, read N- to C-terminus: Gem-associated protein 5 (1508 aa).

The tract at residues 1–124 (MGQEPRTLPP…LHWSPRVKDL (124 aa)) is important for interaction with U1 snRNA. Residues 13–15 (NWY) form an interaction with U4 snRNA region. Position 48 is a phosphoserine (serine 48). Threonine 51 is modified (phosphothreonine). 11 WD repeats span residues 62–104 (GHTE…VVTE), 107–148 (LHQH…QHLF), 150–189 (EPRTIFCLTCSPHHEDLVAIGYKDGIVVIIDISKKGEVIH), 193–264 (GHDD…GVMI), 280–321 (TVKE…RRKY), 333–374 (HSRI…CSWT), 377–417 (SLGG…NNYD), 424–464 (GVKS…PPQI), 468–509 (YHKK…IVLQ), 533–573 (KYKL…LICT), and 576–622 (QHHK…ESSP). Serine 624 carries the post-translational modification Phosphoserine. WD repeat units follow at residues 637 to 677 (GHTA…PLCN) and 680 to 720 (GHRG…HSRP). The segment at 715–790 (QDHSRPPQGK…EGEEQAREPE (76 aa)) is disordered. Positions 739–748 (AKPKKKKKPT) are enriched in basic residues. Threonine 751 carries the post-translational modification Phosphothreonine. A Glycyl lysine isopeptide (Lys-Gly) (interchain with G-Cter in SUMO2) cross-link involves residue lysine 754. A phosphoserine mark is found at serine 757, serine 770, serine 778, and serine 847. Disordered regions lie at residues 1313–1343 (EPSQQLDTASTEETDPETSQPEPNRPSELDL) and 1389–1428 (QKSQLCKSTANGPDKNEPEVEAEQPLCSSQSQCKEEKNEP). A coiled-coil region spans residues 1362–1393 (EKHASLQNSQRTVAEVQETLAEMIRQHQKSQL). The segment covering 1390–1399 (KSQLCKSTAN) has biased composition (polar residues).

This sequence belongs to the WD repeat gemin-5 family. Part of the core SMN complex that contains SMN1, GEMIN2/SIP1, DDX20/GEMIN3, GEMIN4, GEMIN5, GEMIN6, GEMIN7, GEMIN8 and STRAP/UNRIP. Part of the SMN-Sm complex that contains SMN1, GEMIN2/SIP1, DDX20/GEMIN3, GEMIN4, GEMIN5, GEMIN6, GEMIN7, GEMIN8, STRAP/UNRIP and the Sm proteins SNRPB, SNRPD1, SNRPD2, SNRPD3, SNRPE, SNRPF and SNRPG. Interacts with GEMIN2; the interaction is direct. Interacts with SMN1, SNRPB, SNRPD1, SNRPD2, SNRPD3 and SNRPE; the interaction is direct. Interacts with cytosolic DDX20/GEMIN3 and GEMIN4. Interacts with SNRNP70 and HNRNPU. Identified in a complex with 80S ribosomes; binds to the 60S large ribosomal subunit. Interacts with the ribosomal subunits RPL3 and RPL4.

It is found in the nucleus. The protein localises to the nucleoplasm. It localises to the gem. Its subcellular location is the cytoplasm. The SMN complex catalyzes the assembly of small nuclear ribonucleoproteins (snRNPs), the building blocks of the spliceosome, and thereby plays an important role in the splicing of cellular pre-mRNAs. Most spliceosomal snRNPs contain a common set of Sm proteins SNRPB, SNRPD1, SNRPD2, SNRPD3, SNRPE, SNRPF and SNRPG that assemble in a heptameric protein ring on the Sm site of the small nuclear RNA to form the core snRNP (Sm core). In the cytosol, the Sm proteins SNRPD1, SNRPD2, SNRPE, SNRPF and SNRPG are trapped in an inactive 6S pICln-Sm complex by the chaperone CLNS1A that controls the assembly of the core snRNP. To assemble core snRNPs, the SMN complex accepts the trapped 5Sm proteins from CLNS1A forming an intermediate. Binding of snRNA inside 5Sm ultimately triggers eviction of the SMN complex, thereby allowing binding of SNRPD3 and SNRPB to complete assembly of the core snRNP. Within the SMN complex, GEMIN5 recognizes and delivers the small nuclear RNAs (snRNAs) to the SMN complex. Binds to the 7-methylguanosine cap of RNA molecules. Binds to the 3'-UTR of SMN1 mRNA and regulates its translation; does not affect mRNA stability. May play a role in the regulation of protein synthesis via its interaction with ribosomes. The protein is Gem-associated protein 5 (GEMIN5) of Homo sapiens (Human).